Reading from the N-terminus, the 432-residue chain is 3-phosphoshikimate 1-carboxyvinyltransferase (432 aa).

3 residues coordinate 3-phosphoshikimate: Lys23, Ser24, and Arg28. Lys23 is a binding site for phosphoenolpyruvate. Gly95 and Arg123 together coordinate phosphoenolpyruvate. Residues Ser167, Gln169, Asp316, and Lys343 each contribute to the 3-phosphoshikimate site. Position 169 (Gln169) interacts with phosphoenolpyruvate. Residue Asp316 is the Proton acceptor of the active site. Phosphoenolpyruvate contacts are provided by Arg347 and Arg391.

The protein belongs to the EPSP synthase family. As to quaternary structure, monomer.

The protein resides in the cytoplasm. The enzyme catalyses 3-phosphoshikimate + phosphoenolpyruvate = 5-O-(1-carboxyvinyl)-3-phosphoshikimate + phosphate. Its pathway is metabolic intermediate biosynthesis; chorismate biosynthesis; chorismate from D-erythrose 4-phosphate and phosphoenolpyruvate: step 6/7. Its function is as follows. Catalyzes the transfer of the enolpyruvyl moiety of phosphoenolpyruvate (PEP) to the 5-hydroxyl of shikimate-3-phosphate (S3P) to produce enolpyruvyl shikimate-3-phosphate and inorganic phosphate. The sequence is that of 3-phosphoshikimate 1-carboxyvinyltransferase from Limosilactobacillus fermentum (strain NBRC 3956 / LMG 18251) (Lactobacillus fermentum).